The following is a 524-amino-acid chain: RNA-splicing ligase RtcB homolog 2 (524 aa).

Residues D141, C144, H249, H281, and H372 each coordinate Mn(2+). 248 to 252 (NHYLE) contributes to the GMP binding site. Residues 372–373 (HN), 421–424 (GGSM), S428, 447–450 (HGAG), and K523 each bind GMP. Residue H447 is the GMP-histidine intermediate of the active site.

The protein belongs to the RtcB family. In terms of assembly, catalytic component of the tRNA-splicing ligase complex. It depends on Mn(2+) as a cofactor.

It carries out the reaction a 3'-end 3'-phospho-ribonucleotide-RNA + a 5'-end dephospho-ribonucleoside-RNA + GTP = a ribonucleotidyl-ribonucleotide-RNA + GMP + diphosphate. The catalysed reaction is a 3'-end 2',3'-cyclophospho-ribonucleotide-RNA + a 5'-end dephospho-ribonucleoside-RNA + GTP + H2O = a ribonucleotidyl-ribonucleotide-RNA + GMP + diphosphate + H(+). Its function is as follows. Catalytic subunit of the tRNA-splicing ligase complex that acts by directly joining spliced tRNA halves to mature-sized tRNAs by incorporating the precursor-derived splice junction phosphate into the mature tRNA as a canonical 3',5'-phosphodiester. May act as an RNA ligase with broad substrate specificity, and may function toward other RNAs. The protein is RNA-splicing ligase RtcB homolog 2 of Entamoeba dispar (strain ATCC PRA-260 / SAW760).